The sequence spans 111 residues: Cell cycle protein GpsB (111 aa).

The stretch at 38-72 (IKDYEAFHKEFDQLKQQNARLKRELEEQKVAATQV) forms a coiled coil.

It belongs to the GpsB family. In terms of assembly, forms polymers through the coiled coil domains. Interacts with PBP1, MreC and EzrA.

It localises to the cytoplasm. Divisome component that associates with the complex late in its assembly, after the Z-ring is formed, and is dependent on DivIC and PBP2B for its recruitment to the divisome. Together with EzrA, is a key component of the system that regulates PBP1 localization during cell cycle progression. Its main role could be the removal of PBP1 from the cell pole after pole maturation is completed. Also contributes to the recruitment of PBP1 to the division complex. Not essential for septum formation. The sequence is that of Cell cycle protein GpsB from Bacillus mycoides (strain KBAB4) (Bacillus weihenstephanensis).